The sequence spans 487 residues: Glycogen synthase 2 (487 aa).

Position 12 (K12) interacts with ADP-alpha-D-glucose.

The protein belongs to the glycosyltransferase 1 family. Bacterial/plant glycogen synthase subfamily.

It catalyses the reaction [(1-&gt;4)-alpha-D-glucosyl](n) + ADP-alpha-D-glucose = [(1-&gt;4)-alpha-D-glucosyl](n+1) + ADP + H(+). Its pathway is glycan biosynthesis; glycogen biosynthesis. Functionally, synthesizes alpha-1,4-glucan chains using ADP-glucose. The chain is Glycogen synthase 2 from Methylococcus capsulatus (strain ATCC 33009 / NCIMB 11132 / Bath).